A 255-amino-acid chain; its full sequence is Myogenic factor 5 (255 aa).

In terms of domain architecture, bHLH spans 83–134; sequence DRRKAATMRERRRLKKVNQAFETLKRCTTTNPNQRLPKVEILRNAIRYIESL. A disordered region spans residues 226 to 249; the sequence is DTASLSPATSANSQPATPGPSSSR.

Efficient DNA binding requires dimerization with another bHLH protein.

It is found in the nucleus. In terms of biological role, acts as a transcriptional activator that promotes transcription of muscle-specific target genes and plays a role in muscle differentiation. Together with MYOG and MYOD1, co-occupies muscle-specific gene promoter core region during myogenesis. Induces fibroblasts to differentiate into myoblasts. Probable sequence specific DNA-binding protein. This chain is Myogenic factor 5 (Myf5), found in Mus musculus (Mouse).